A 25-amino-acid polypeptide reads, in one-letter code: Chitinolytic alpha-amylase inhibitor PvCAI (25 aa).

As to quaternary structure, homodimer.

The enzyme catalyses Random endo-hydrolysis of N-acetyl-beta-D-glucosaminide (1-&gt;4)-beta-linkages in chitin and chitodextrins.. Functionally, alpha-amylase inhibitor, active against Z.subfasciatus alpha-amylase (ZSA) but not porcine pancreatic alpha-amylase (PPA). Has chitinase activity. This chain is Chitinolytic alpha-amylase inhibitor PvCAI, found in Phaseolus vulgaris (Kidney bean).